The following is a 78-amino-acid chain: Calcium/calmodulin-dependent protein kinase II inhibitor 1 (78 aa).

Residues N41–K68 are CAMK2 inhibitory domain.

The protein belongs to the CAMK2N family. As to quaternary structure, interacts with CAMK2B; the presence of Ca(2+)/calmodulin increases the interaction but is not essential. Interacts with CAMK2A; this interaction requires CAMK2A activation by Ca(2+).

The protein resides in the synapse. It is found in the cell projection. The protein localises to the dendrite. It localises to the postsynaptic density. In terms of biological role, potent and specific inhibitor of CaM-kinase II (CAMK2). Plays a role in the maintenance of long-term retrieval-induced memory in response to contextual fear. Modulates blood pressure and vascular reactivity via regulation of CAMK2 activity in addition to regulation of left ventricular mass. Mediates the NLRP3 inflammasome in cardiomyocytes via acting as an inhibitor of the MAPK14/p38 and MAPK8/JNK pathways, thereby regulating ventricular remodeling and cardiac rhythm post-myocardial infarction. Negatively effects insulin sensitivity and promotes lipid formation in adipose tissues independent of CAMK2 signaling. This chain is Calcium/calmodulin-dependent protein kinase II inhibitor 1 (CAMK2N1), found in Bos taurus (Bovine).